A 57-amino-acid polypeptide reads, in one-letter code: MLFKSLQSITSVNSIQKNQISSVSVGSSQSNNNAALLDAAALVVIPGLLTVAAVAHI.

A helical membrane pass occupies residues Ala-34–Val-54.

The protein resides in the membrane. This is an uncharacterized protein from Dictyostelium discoideum (Social amoeba).